Here is a 212-residue protein sequence, read N- to C-terminus: B3 domain-containing protein Os04g0386900 (212 aa).

Positions 1–78 (MRAATALPSI…PRPPEPEPEK (78 aa)) are disordered. Low complexity-rich tracts occupy residues 8–23 (PSIPSSSSPSPMASDP) and 36–46 (DAGAEDPAAVD). The segment at residues 93–191 (FTCIMCKSHV…EFRVQVLRAE (99 aa)) is a DNA-binding region (TF-B3).

It localises to the nucleus. The chain is B3 domain-containing protein Os04g0386900 from Oryza sativa subsp. japonica (Rice).